The sequence spans 252 residues: Acyl-coenzyme A diphosphatase FITM2 (252 aa).

The Cytoplasmic portion of the chain corresponds to 1–25 (MAAAVAGSLVDKLVCLWRQPYTRIY). A helical membrane pass occupies residues 26–46 (LPHLFFCISLVGSVLKNAELV). Residues 47–59 (PESYFSSSRNVLN) are Lumenal-facing. A helical transmembrane segment spans residues 60–80 (LYFVKVSWGWTIVLLLPFIAY). The Cytoplasmic segment spans residues 81 to 94 (SNFYIKSHMFALRR). The helical transmembrane segment at 95–115 (LTSLLVATLVWYICTETFFYI) threads the bilayer. Residues 116-156 (EDITGSCYESNTMVVIRGEFDTKAACRKAGFFWDGFDISGH) are Lumenal-facing. The active site involves His-156. Residues 157 to 177 (SFILSYSSLVIMEEMVPMLHI) form a helical membrane-spanning segment. The Cytoplasmic portion of the chain corresponds to 178-190 (QPAYRNPPLDCLY). Residues 191–211 (LALNVIVAIWIWMFGCTSVYF) traverse the membrane as a helical segment. The active site involves His-212. Residues 212-223 (HDIIDKILGTSC) are Lumenal-facing. The helical transmembrane segment at 224–244 (GILGWYMTYKVWYVKLFSPGL) threads the bilayer. Residues 245–252 (PPQPKQHT) lie on the Cytoplasmic side of the membrane.

This sequence belongs to the FIT family. FIT2 subfamily. In terms of tissue distribution, widely expressed.

The protein resides in the endoplasmic reticulum membrane. It carries out the reaction an acyl-CoA + H2O = an acyl-4'-phosphopantetheine + adenosine 3',5'-bisphosphate + 2 H(+). Functionally, fatty acyl-coenzyme A (CoA) diphosphatase that hydrolyzes fatty acyl-CoA to yield acyl-4'-phosphopantetheine and adenosine 3',5'-bisphosphate. Preferentially hydrolyzes unsaturated long-chain acyl-CoA substrates in the endoplasmic reticulum (ER) lumen. This catalytic activity is required for maintaining ER structure and for lipid droplets (LDs) biogenesis, which are lipid storage organelles involved in maintaining lipid and energy homeostasis. Required for lipid droplet accumulation in liver and intestine during embryogenesis. May directly bind to diacylglycerol (DAGs) and triacylglycerol, which is also important for LD biogenesis. May support directional budding of nacent LDs from the ER into the cytosol by reducing DAG levels at sites of LD formation. May play a role in the regulation of cell morphology, ER morphology and cytoskeletal organization. This is Acyl-coenzyme A diphosphatase FITM2 from Danio rerio (Zebrafish).